We begin with the raw amino-acid sequence, 521 residues long: NAD(P)H-quinone oxidoreductase subunit 2 (521 aa).

Helical transmembrane passes span 15 to 35, 42 to 62, 79 to 99, 109 to 126, 131 to 153, 167 to 187, 208 to 228, 242 to 262, 276 to 296, 304 to 324, 332 to 352, 376 to 396, 398 to 418, and 464 to 484; these read ILPE…DITF, WTPY…YTQW, LSIV…LMSV, IGEF…AMFL, ELVM…TGYM, LLIG…LYGL, LALV…IAAV, PTPV…ALAI, WQFI…VVAI, MLAY…VIGT, VFYL…VILF, LALS…GFFG, LYLF…LGLI, and VGLV…NPLL.

This sequence belongs to the complex I subunit 2 family. In terms of assembly, NDH-1 can be composed of about 15 different subunits; different subcomplexes with different compositions have been identified which probably have different functions.

Its subcellular location is the cellular thylakoid membrane. It catalyses the reaction a plastoquinone + NADH + (n+1) H(+)(in) = a plastoquinol + NAD(+) + n H(+)(out). The enzyme catalyses a plastoquinone + NADPH + (n+1) H(+)(in) = a plastoquinol + NADP(+) + n H(+)(out). Its function is as follows. NDH-1 shuttles electrons from an unknown electron donor, via FMN and iron-sulfur (Fe-S) centers, to quinones in the respiratory and/or the photosynthetic chain. The immediate electron acceptor for the enzyme in this species is believed to be plastoquinone. Couples the redox reaction to proton translocation, and thus conserves the redox energy in a proton gradient. Cyanobacterial NDH-1 also plays a role in inorganic carbon-concentration. The polypeptide is NAD(P)H-quinone oxidoreductase subunit 2 (Acaryochloris marina (strain MBIC 11017)).